Consider the following 316-residue polypeptide: HPr kinase/phosphorylase (316 aa).

Residues His143 and Lys164 contribute to the active site. Residue 158–165 (GEAGSGKS) coordinates ATP. Ser165 provides a ligand contact to Mg(2+). Asp182 functions as the Proton acceptor; for phosphorylation activity. Proton donor; for dephosphorylation activity in the catalytic mechanism. Positions 206–215 (LEVRGLGVLN) are important for the catalytic mechanism of both phosphorylation and dephosphorylation. Glu207 is a binding site for Mg(2+). Arg251 is a catalytic residue. An important for the catalytic mechanism of dephosphorylation region spans residues 272 to 277 (PVMPGR).

It belongs to the HPrK/P family. Homohexamer. Mg(2+) is required as a cofactor.

The enzyme catalyses [HPr protein]-L-serine + ATP = [HPr protein]-O-phospho-L-serine + ADP + H(+). It carries out the reaction [HPr protein]-O-phospho-L-serine + phosphate + H(+) = [HPr protein]-L-serine + diphosphate. Functionally, catalyzes the ATP- as well as the pyrophosphate-dependent phosphorylation of a specific serine residue in HPr, a phosphocarrier protein of the phosphoenolpyruvate-dependent sugar phosphotransferase system (PTS). HprK/P also catalyzes the pyrophosphate-producing, inorganic phosphate-dependent dephosphorylation (phosphorolysis) of seryl-phosphorylated HPr (P-Ser-HPr). This is HPr kinase/phosphorylase from Xylella fastidiosa (strain 9a5c).